Here is a 28-residue protein sequence, read N- to C-terminus: Caerulein precursor fragment B1 (28 aa).

The protein belongs to the gastrin/cholecystokinin family. In terms of tissue distribution, expressed by the skin glands.

It is found in the secreted. In terms of biological role, peptide CPF-B1: Has antimicrobial activity against Gram-negative bacteria E.coli ATCC 25922 (MIC=5 uM) and multidrug-resistant A.baumannii (MIC=4-8 uM), against Gram-positive bacteria S.aureus ATCC 25923 (MIC=5 uM) and methicillin-resistant S.aureus and against fungus C.albicans ATCC 90028 (MIC=25 uM). Has some hemolytic activity against human erythrocytes at high concentrations. The sequence is that of Caerulein precursor fragment B1 from Xenopus borealis (Kenyan clawed frog).